The chain runs to 308 residues: Olfactory receptor 2T7 (308 aa).

At 1–17 the chain is on the extracellular side; the sequence is MPTLSFWVCSATPVSPG. A helical transmembrane segment spans residues 18-40; sequence FFALILLVFVTSIASNVVKIILI. Residues 41–51 lie on the Cytoplasmic side of the membrane; it reads HIDSRLHTPMY. A helical transmembrane segment spans residues 52 to 74; the sequence is FLLSQLSLRDILYISTIVPKMLV. Over 75-88 the chain is Extracellular; sequence DQVMSQRAISFAGC. Cysteines 88 and 170 form a disulfide. The helical transmembrane segment at 89-109 threads the bilayer; the sequence is TAQHFLYLTLAGAEFFLLGLM. Over 110–130 the chain is Cytoplasmic; sequence SCDRYVAICNPLHYPDLMSRK. Residues 131–151 form a helical membrane-spanning segment; that stretch reads ICWLIVAAAWLGGSIDGFLLT. The Extracellular portion of the chain corresponds to 152–188; it reads PVTMQFPFCASREINHFFCEVPALLKLSCTDTSAYET. A helical transmembrane segment spans residues 189 to 209; sequence AMYVCCIMMLLIPFSVISGSY. Residues 210 to 235 are Cytoplasmic-facing; that stretch reads TRILITVYRMSEAEGRRKAVATCSSH. Residues 236–256 form a helical membrane-spanning segment; it reads MVVVSLFYGAAMYTYVLPHSY. The Extracellular portion of the chain corresponds to 257-262; that stretch reads HTPEQD. The helical transmembrane segment at 263-283 threads the bilayer; sequence KAVSAFYTILTPMLNPLIYSL. Topologically, residues 284-308 are cytoplasmic; sequence RNKDVTGALQKVVGRCVSSGKVTTF.

Belongs to the G-protein coupled receptor 1 family.

It localises to the cell membrane. Its function is as follows. Odorant receptor. In Homo sapiens (Human), this protein is Olfactory receptor 2T7 (OR2T7).